The chain runs to 373 residues: Glutamine synthetase (373 aa).

In terms of domain architecture, GS beta-grasp spans 24–106; it reads EKVQAMYIWI…VLCEVFKYNR (83 aa). In terms of domain architecture, GS catalytic spans 113 to 373; sequence LRHTCRRIMD…TGDEPFEYKN (261 aa). E134 is an ATP binding site. Residues E134, E136, E196, and E203 each contribute to the Mn(2+) site. ATP is bound at residue 203 to 208; it reads EFQVGP. 246 to 247 contributes to the L-glutamate binding site; it reads NW. H253 is a binding site for Mn(2+). ATP is bound by residues 255 to 257, R319, and R324; that span reads NFS. R319 contributes to the L-glutamate binding site. 336-338 contacts ADP; sequence YFE. E338 lines the Mn(2+) pocket. An L-glutamate-binding site is contributed by R340.

It belongs to the glutamine synthetase family. As to quaternary structure, homooctamer and homotetramer. It depends on biotin as a cofactor. Mg(2+) is required as a cofactor. The cofactor is Mn(2+). In terms of tissue distribution, expressed in retina, brain and liver. Little or no detectable expression in breast muscle, pancreas and spleen.

It localises to the cytoplasm. The protein resides in the mitochondrion. The enzyme catalyses L-glutamate + NH4(+) + ATP = L-glutamine + ADP + phosphate + H(+). It carries out the reaction L-glutamate + H(+) = 4-aminobutanoate + CO2. Glutamate to glutamine ratio influences catalytic activity. At glutamate to glutamine ratios greater than 4, decarboxylase activity ceases. In the presence of manganese, synthetase activity is limited to concentrations between 10 mM and 20 mM, whereas decarboxylase activity is not affected. Both catalytic activities are inhibited by avidin. Its function is as follows. Glutamine synthetase that catalyzes the ATP-dependent conversion of glutamate and ammonia to glutamine. When expressed in liver, it may be involved in detoxifying intramitochondrially generated ammonia. Also acts as glutamate decarboxylase by catalyzing the production of 4-aminobutanoate (gamma-aminobutyric acid, GABA) in a pyridoxal phosphate-independent manner. This Gallus gallus (Chicken) protein is Glutamine synthetase.